A 575-amino-acid polypeptide reads, in one-letter code: Epsin-1 (575 aa).

Positions 8, 11, 25, 30, 63, and 73 each coordinate a 1,2-diacyl-sn-glycero-3-phospho-(1D-myo-inositol-4,5-bisphosphate). One can recognise an ENTH domain in the interval 12–144 (NIVHNYSEAE…RDEDRLREER (133 aa)). The tract at residues 149-186 (KTKEKLAQTATASSAAVGSGPPPEAEQAWPQSSGEEEL) is disordered. The span at 157-167 (TATASSAAVGS) shows a compositional bias: low complexity. UIM domains are found at residues 183–202 (EEELQLQLALAMSKEEADQP), 208–227 (EDDVQLQLALSLSREEHDKE), and 233–252 (GDDLRLQMAIEESKRETGGK). Disordered stretches follow at residues 264-283 (FTTPAPPQASDPWGGPASVP) and 293-575 (SDPW…PFLL). Tandem repeats lie at residues 274 to 276 (DPW), 294 to 296 (DPW), 306 to 308 (DPW), 319 to 321 (DPW), 332 to 334 (DPW), 349 to 351 (DPW), 367 to 369 (DPW), and 377 to 379 (DPW). The interval 274-379 (DPWGGPASVP…APAPAFSDPW (106 aa)) is 8 X 3 AA repeats of D-P-W. Over residues 306-316 (DPWGGAAPTPA) the composition is skewed to low complexity. The segment covering 333-346 (PWGGTPAPAAGEGP) has biased composition (low complexity). Over residues 367–379 (DPWAPAPAFSDPW) the composition is skewed to low complexity. Position 382 is a phosphoserine (serine 382). The [DE]-X(1,2)-F-X-X-[FL]-X-X-X-R motif signature appears at 401–410 (DEFSDFDRLR). 2 positions are modified to phosphoserine: serine 418 and serine 419. Position 420 is a phosphothreonine (threonine 420). A phosphoserine mark is found at serine 434, serine 446, and serine 453. The segment covering 453-467 (SPPPAATPTPTPPTR) has biased composition (pro residues). 3 positions are modified to phosphothreonine: threonine 459, threonine 463, and threonine 469. Residue serine 472 is modified to Phosphoserine. Threonine 493 is subject to Phosphothreonine. A run of 2 repeats spans residues 501–503 (NPF) and 517–519 (NPF). A 3 X 3 AA repeats of N-P-F region spans residues 501–573 (NPFLPSGAPA…GPPAPNTNPF (73 aa)). Arginine 533 is modified (omega-N-methylarginine). Positions 556–569 (GLPPMMPPGPPAPN) are enriched in pro residues. Residues 571–573 (NPF) form repeat 3.

It belongs to the epsin family. Monomer. Binds ITSN1. Binds clathrin, ZBTB16/ZNF145, AP2A1 and AP2A2. Binds ubiquitinated proteins. Interacts with RALBP1 in a complex also containing NUMB and TFAP2A during interphase and mitosis. Interacts with AP2B1. Interacts with UBQLN2. Interacts with REPS2; the interaction is direct. Interacts with EPS15; the interaction is direct. Interacts with ENTREP1. Ubiquitinated. Post-translationally, phosphorylated on serine and/or threonine residues in mitotic cells. Phosphorylation reduces interaction with REPS2, AP-2 and the membrane fraction. Depolarization of synaptosomes results in dephosphorylation. As to expression, ubiquitously expressed. Detected in liver, spleen and testis, and weakly in lung and thymus (at protein level).

Its subcellular location is the cytoplasm. The protein resides in the cell membrane. The protein localises to the nucleus. It is found in the membrane. It localises to the clathrin-coated pit. Its function is as follows. Binds to membranes enriched in phosphatidylinositol 4,5-bisphosphate (PtdIns(4,5)P2). Modifies membrane curvature and facilitates the formation of clathrin-coated invaginations. Regulates receptor-mediated endocytosis. This Rattus norvegicus (Rat) protein is Epsin-1 (Epn1).